The following is a 49-amino-acid chain: Unknown protein from spot 75 of 2D-PAGE of etiolated coleoptile (49 aa).

The polypeptide is Unknown protein from spot 75 of 2D-PAGE of etiolated coleoptile (Zea mays (Maize)).